The primary structure comprises 365 residues: tRNA N6-adenosine threonylcarbamoyltransferase (365 aa).

The Fe cation site is built by His-119 and His-123. Residues Leu-141–Gly-145, Asp-174, and Gly-187 contribute to the substrate site. Residues Gln-184 to Arg-203 form a disordered region. Residues Gly-192–Arg-201 are compositionally biased toward basic and acidic residues. Asn-289 lines the substrate pocket. A Fe cation-binding site is contributed by Asp-317. The segment at Ala-342–Ala-365 is disordered.

Belongs to the KAE1 / TsaD family. It depends on Fe(2+) as a cofactor.

It is found in the cytoplasm. It carries out the reaction L-threonylcarbamoyladenylate + adenosine(37) in tRNA = N(6)-L-threonylcarbamoyladenosine(37) in tRNA + AMP + H(+). Required for the formation of a threonylcarbamoyl group on adenosine at position 37 (t(6)A37) in tRNAs that read codons beginning with adenine. Is involved in the transfer of the threonylcarbamoyl moiety of threonylcarbamoyl-AMP (TC-AMP) to the N6 group of A37, together with TsaE and TsaB. TsaD likely plays a direct catalytic role in this reaction. This Ruegeria pomeroyi (strain ATCC 700808 / DSM 15171 / DSS-3) (Silicibacter pomeroyi) protein is tRNA N6-adenosine threonylcarbamoyltransferase.